A 247-amino-acid polypeptide reads, in one-letter code: Anionic trypsin (247 aa).

Residues 1 to 15 (MNPLLILAFLGAAVA) form the signal peptide. Residues 16-23 (TPTDDDDK) constitute a propeptide, activation peptide. The region spanning 24–244 (IVGGYTCEEN…FVDWIQSTIA (221 aa)) is the Peptidase S1 domain. 6 disulfide bridges follow: Cys-30/Cys-160, Cys-48/Cys-64, Cys-132/Cys-233, Cys-139/Cys-206, Cys-171/Cys-185, and Cys-196/Cys-220. His-63 acts as the Charge relay system in catalysis. 4 residues coordinate Ca(2+): Glu-75, Asn-77, Val-80, and Glu-85. Catalysis depends on Asp-107, which acts as the Charge relay system. Ser-200 serves as the catalytic Charge relay system.

Belongs to the peptidase S1 family. It depends on Ca(2+) as a cofactor.

It localises to the secreted. The protein resides in the extracellular space. It catalyses the reaction Preferential cleavage: Arg-|-Xaa, Lys-|-Xaa.. The protein is Anionic trypsin of Canis lupus familiaris (Dog).